The chain runs to 442 residues: Cation channel sperm-associated protein 4 (442 aa).

The Cytoplasmic segment spans residues 1-66; it reads MSEKHKWWQQ…TQMYIKQLLR (66 aa). A helical transmembrane segment spans residues 67–88; it reads HPAFQLLLAFLLLSNAITIALR. The Extracellular portion of the chain corresponds to 89-98; the sequence is TNSYLGQKHY. The helical transmembrane segment at 99–125 threads the bilayer; the sequence is ELFSTIDDIVLTILICEVLLGWLNGFW. Residues 126–129 are Cytoplasmic-facing; sequence IFWK. The chain crosses the membrane as a helical span at residues 130-153; that stretch reads DGWNILNFAIVFILFMGFFIKQLD. The Extracellular portion of the chain corresponds to 154-156; it reads MVA. A helical membrane pass occupies residues 157 to 175; sequence ITYPLRVLRLVHVCMAVEP. Residues 176–188 lie on the Cytoplasmic side of the membrane; sequence LARIIKVILQSMP. A helical membrane pass occupies residues 189–212; the sequence is DLANVMALILFFMLVFSVFGVTLF. Residues 213–222 are Extracellular-facing; that stretch reads GAFVPKHFQN. The segment at residues 223–234 is an intramembrane region (helical; Pore-forming); it reads MGVALYTLFICI. Over 235 to 255 the chain is Extracellular; that stretch reads TQDGWLDIYTDFQMDEREYAM. A helical transmembrane segment spans residues 256 to 283; the sequence is EVGGAIYFAVFITLGAFIGLNLFVVVVT. Residues 284–442 are Cytoplasmic-facing; that stretch reads TNLEQMMKTG…NMVNKHKFSH (159 aa).

This sequence belongs to the cation channel sperm-associated (TC 1.A.1.19) family. In terms of assembly, component of the CatSper complex or CatSpermasome composed of the core pore-forming members CATSPER1, CATSPER2, CATSPER3 and CATSPER4 as well as auxiliary members CATSPERB, CATSPERG2, CATSPERD, CATSPERE, CATSPERZ, C2CD6/CATSPERT, SLCO6C1, TMEM249, TMEM262 and EFCAB9. HSPA1 may be an additional auxiliary complex member. The core complex members CATSPER1, CATSPER2, CATSPER3 and CATSPER4 form a heterotetrameric channel. The auxiliary CATSPERB, CATSPERG2, CATSPERD and CATSPERE subunits form a pavilion-like structure over the pore which stabilizes the complex through interactions with CATSPER4, CATSPER3, CATSPER1 and CATSPER2 respectively. SLCO6C1 interacts with CATSPERE and TMEM262/CATSPERH interacts with CATSPERB, further stabilizing the complex. C2CD6/CATSPERT interacts at least with CATSPERD and is required for targeting the CatSper complex in the flagellar membrane. Testis-specific.

Its subcellular location is the cell projection. The protein localises to the cilium. It is found in the flagellum membrane. It carries out the reaction Ca(2+)(in) = Ca(2+)(out). In contrast to the human ortholog, not activated by progesterone. Activated by intracellular alkalinization. In terms of biological role, pore-forming subunit of the CatSper complex, a sperm-specific voltage-gated calcium channel that plays a central role in sperm cell hyperactivation. Controls calcium entry to mediate the hyperactivated motility, a step needed for sperm motility which is essential late in the preparation of sperm for fertilization. In Mus musculus (Mouse), this protein is Cation channel sperm-associated protein 4 (Catsper4).